The following is an 832-amino-acid chain: Thymine dioxygenase JBP1-A (832 aa).

Residues 1 to 12 show a composition bias toward basic and acidic residues; that stretch reads MKQKRGKQDVKM. The segment at 1–24 is disordered; the sequence is MKQKRGKQDVKMLESAPPQLLPKK. The interval 80 to 282 is thymine dioxygenase; sequence VVGGVFLPGA…RLTCVCYYRA (203 aa). Fe cation contacts are provided by H207, D209, and H257. 2-oxoglutarate is bound at residue R273. Positions 409-578 are DNA-binding JBP1 domain; the sequence is LGGALKAAEE…IEEARRRGSS (170 aa).

Belongs to the TET family. JBP1 subfamily. As to quaternary structure, monomer. Binds to DNA as a monomer. Fe(2+) is required as a cofactor.

The protein localises to the nucleus. It catalyses the reaction thymine + 2-oxoglutarate + O2 = 5-hydroxymethyluracil + succinate + CO2. Its function is as follows. Dioxygenase that catalyzes the first step of DNA base J (beta-d-glucosyl-HOMedU) biosynthesis by converting thymine to 5-hydroxymethyluracil (HOMedU). DNA base J is a hypermodified thymidine residue found in the genome of kinetoplastid parasites, which is localized primarily to repetitive DNA, namely the telomeres, and is implicated in the regulation of antigenic variation. Also specifically binds to base J-containing DNA (J-DNA). Involved in propagation and maintenance of DNA base J synthesis initiated by JBP2 by specifically binding already synthesized DNA base J and propagating J synthesis. Thymine dioxygenase activity and J-DNA-binding are independent functions. The polypeptide is Thymine dioxygenase JBP1-A (JBP1A) (Trypanosoma cruzi (strain CL Brener)).